Reading from the N-terminus, the 102-residue chain is MLNDAKQTRANPGTSRPHSNGGGSSHGNELPRRTEQRAQGPRQPARLPKQGKTNGKSDGNITAGETQRGGIPRGKGPRGGKTNTRRTPPKAGAQPQPSNNRK.

A disordered region spans residues 1–102 (MLNDAKQTRA…AQPQPSNNRK (102 aa)). 2 stretches are compositionally biased toward polar residues: residues 8-17 (TRANPGTSRP) and 51-65 (GKTNGKSDGNITAGE). Basic residues predominate over residues 75 to 88 (KGPRGGKTNTRRTP).

Functionally, not known. Encoded on a subgenomic RNA (RNA3) synthesized during replication and which is co-terminal with RNA1. This chain is Protein B1 (B1), found in Black beetle virus (BBV).